Here is a 406-residue protein sequence, read N- to C-terminus: Cysteine desulfurase (406 aa).

The residue at position 226 (Lys226) is an N6-(pyridoxal phosphate)lysine. Catalysis depends on Cys364, which acts as the Cysteine persulfide intermediate.

This sequence belongs to the class-V pyridoxal-phosphate-dependent aminotransferase family. Csd subfamily. Homodimer. Interacts with SufE and the SufBCD complex composed of SufB, SufC and SufD. The interaction with SufE is required to mediate the direct transfer of the sulfur atom from the S-sulfanylcysteine. It depends on pyridoxal 5'-phosphate as a cofactor.

The protein resides in the cytoplasm. It catalyses the reaction (sulfur carrier)-H + L-cysteine = (sulfur carrier)-SH + L-alanine. The catalysed reaction is L-selenocysteine + AH2 = hydrogenselenide + L-alanine + A + H(+). It participates in cofactor biosynthesis; iron-sulfur cluster biosynthesis. Cysteine desulfurases mobilize the sulfur from L-cysteine to yield L-alanine, an essential step in sulfur metabolism for biosynthesis of a variety of sulfur-containing biomolecules. Component of the suf operon, which is activated and required under specific conditions such as oxidative stress and iron limitation. Acts as a potent selenocysteine lyase in vitro, that mobilizes selenium from L-selenocysteine. Selenocysteine lyase activity is however unsure in vivo. The protein is Cysteine desulfurase of Yersinia pseudotuberculosis serotype IB (strain PB1/+).